The following is a 168-amino-acid chain: ATP synthase subunit b (168 aa).

Residues 9–29 (AIPFGTIAYTLVVFLILLVML) form a helical membrane-spanning segment.

This sequence belongs to the ATPase B chain family. In terms of assembly, F-type ATPases have 2 components, F(1) - the catalytic core - and F(0) - the membrane proton channel. F(1) has five subunits: alpha(3), beta(3), gamma(1), delta(1), epsilon(1). F(0) has three main subunits: a(1), b(2) and c(10-14). The alpha and beta chains form an alternating ring which encloses part of the gamma chain. F(1) is attached to F(0) by a central stalk formed by the gamma and epsilon chains, while a peripheral stalk is formed by the delta and b chains.

The protein localises to the cell membrane. Functionally, f(1)F(0) ATP synthase produces ATP from ADP in the presence of a proton or sodium gradient. F-type ATPases consist of two structural domains, F(1) containing the extramembraneous catalytic core and F(0) containing the membrane proton channel, linked together by a central stalk and a peripheral stalk. During catalysis, ATP synthesis in the catalytic domain of F(1) is coupled via a rotary mechanism of the central stalk subunits to proton translocation. In terms of biological role, component of the F(0) channel, it forms part of the peripheral stalk, linking F(1) to F(0). This is ATP synthase subunit b from Bacillus cytotoxicus (strain DSM 22905 / CIP 110041 / 391-98 / NVH 391-98).